The sequence spans 344 residues: Geranylgeranyl transferase type-2 subunit alpha (344 aa).

6 PFTA repeats span residues 44 to 78 (YSEG…NDVF), 89 to 123 (LLDN…NAPY), 125 to 159 (NWNY…QIER), 165 to 199 (LAKK…TILN), 214 to 248 (ILEQ…HCNP), and 266 to 293 (YLQK…SLVN).

The protein belongs to the protein prenyltransferase subunit alpha family. In terms of assembly, heterodimer of an alpha and a beta subunit.

The catalysed reaction is geranylgeranyl diphosphate + L-cysteinyl-[protein] = S-geranylgeranyl-L-cysteinyl-[protein] + diphosphate. Its function is as follows. Catalyzes the transfer of a geranyl-geranyl moiety from geranyl-geranyl pyrophosphate to proteins having the C-terminal-XCC or -XCXC, where both cysteines may become modified. This Schizosaccharomyces pombe (strain 972 / ATCC 24843) (Fission yeast) protein is Geranylgeranyl transferase type-2 subunit alpha (bet4).